The following is a 130-amino-acid chain: Large-conductance mechanosensitive channel (130 aa).

The Cytoplasmic portion of the chain corresponds to 1 to 14 (MWNEFKAFAMRGNI). The chain crosses the membrane as a helical span at residues 15–43 (VDLAIGVVIGGAFGKIVTSLVNDIIMPLV). The Extracellular portion of the chain corresponds to 44-65 (GLLLGGLDFSGLSFTFGDAVVK). The helical transmembrane segment at 66 to 85 (YGSFIQTIVNFLIISFSIFI) threads the bilayer. The Cytoplasmic portion of the chain corresponds to 86–130 (VIRTLNGLRRKKEAEEEAAEEAVDAQEELLKEIRDLLKQQAKSPE).

It belongs to the MscL family. As to quaternary structure, homopentamer.

It is found in the cell membrane. In terms of biological role, channel that opens in response to stretch forces in the membrane lipid bilayer. Forms a nonselective ion channel with a conductance of about 4 nanosiemens. May participate in the regulation of osmotic pressure changes within the cell. This is Large-conductance mechanosensitive channel from Bacillus subtilis (strain 168).